The following is a 118-amino-acid chain: Large ribosomal subunit protein bL17 (118 aa).

It belongs to the bacterial ribosomal protein bL17 family. In terms of assembly, part of the 50S ribosomal subunit. Contacts protein L32.

In Phytoplasma australiense, this protein is Large ribosomal subunit protein bL17.